Consider the following 145-residue polypeptide: D-aminoacyl-tRNA deacylase (145 aa).

The Gly-cisPro motif, important for rejection of L-amino acids signature appears at 137–138; the sequence is GP.

The protein belongs to the DTD family. As to quaternary structure, homodimer.

The protein localises to the cytoplasm. It catalyses the reaction glycyl-tRNA(Ala) + H2O = tRNA(Ala) + glycine + H(+). It carries out the reaction a D-aminoacyl-tRNA + H2O = a tRNA + a D-alpha-amino acid + H(+). Its function is as follows. An aminoacyl-tRNA editing enzyme that deacylates mischarged D-aminoacyl-tRNAs. Also deacylates mischarged glycyl-tRNA(Ala), protecting cells against glycine mischarging by AlaRS. Acts via tRNA-based rather than protein-based catalysis; rejects L-amino acids rather than detecting D-amino acids in the active site. By recycling D-aminoacyl-tRNA to D-amino acids and free tRNA molecules, this enzyme counteracts the toxicity associated with the formation of D-aminoacyl-tRNA entities in vivo and helps enforce protein L-homochirality. The polypeptide is D-aminoacyl-tRNA deacylase (Ectopseudomonas mendocina (strain ymp) (Pseudomonas mendocina)).